We begin with the raw amino-acid sequence, 879 residues long: Metabotropic glutamate receptor 3 (879 aa).

The N-terminal stretch at 1–22 (MKMLTRLQVLTLALFSKGFLLS) is a signal peptide. Residues 23–576 (LGDHNFLRRE…EDYIRWEDAW (554 aa)) are Extracellular-facing. A disulfide bond links Cys-57 and Cys-99. Residues Ser-151 and 172–174 (AST) each bind L-glutamate. Asn-209 carries an N-linked (GlcNAc...) asparagine glycan. Tyr-222 provides a ligand contact to L-glutamate. 7 disulfides stabilise this stretch: Cys-240-Cys-527, Cys-361-Cys-373, Cys-412-Cys-419, Cys-509-Cys-528, Cys-513-Cys-531, Cys-534-Cys-546, and Cys-549-Cys-562. N-linked (GlcNAc...) asparagine glycosylation is present at Asn-292. Asp-301 provides a ligand contact to L-glutamate. Lys-389 is a binding site for L-glutamate. N-linked (GlcNAc...) asparagine glycans are attached at residues Asn-414 and Asn-439. Residues 577-599 (AIGPVTIACLGFMCTCMVVTVFI) traverse the membrane as a helical segment. Over 600 to 613 (KHNNTPLVKASGRE) the chain is Cytoplasmic. Residues 614 to 634 (LCYILLFGVGLSYCMTFFFIA) traverse the membrane as a helical segment. The Extracellular portion of the chain corresponds to 635-645 (KPSPVICALRR). A helical transmembrane segment spans residues 646–664 (LGLGSSFAICYSALLTKTN). The Cytoplasmic portion of the chain corresponds to 665–688 (CIARIFDGVKNGAQRPKFISPSSQ). A helical membrane pass occupies residues 689 to 709 (VFICLGLILVQIVMVSVWLIL). The Extracellular portion of the chain corresponds to 710-734 (EAPGTRRYTLAEKRETVILKCNVKD). The chain crosses the membrane as a helical span at residues 735-756 (SSMLISLTYDVILVILCTVYAF). Over 757 to 769 (KTRKCPENFNEAK) the chain is Cytoplasmic. The chain crosses the membrane as a helical span at residues 770–792 (FIGFTMYTTCIIWLAFLPIFYVT). Residues 793–802 (SSDYRVQTTT) lie on the Extracellular side of the membrane. The chain crosses the membrane as a helical span at residues 803–828 (MCISVSLSGFVVLGCLFAPKVHIILF). The Cytoplasmic portion of the chain corresponds to 829–879 (QPQKNVVTHRLHLNRFSVSGTGTTYSQSSASTYVPTVCNGREVLDSTTSSL).

It belongs to the G-protein coupled receptor 3 family. As to quaternary structure, interacts with TAMALIN. In terms of tissue distribution, detected in brain cortex, thalamus, subthalamic nucleus, substantia nigra, hypothalamus, hippocampus, corpus callosum, caudate nucleus and amygdala.

It is found in the cell membrane. In terms of biological role, G-protein coupled receptor for glutamate. Ligand binding causes a conformation change that triggers signaling via guanine nucleotide-binding proteins (G proteins) and modulates the activity of down-stream effectors. Signaling inhibits adenylate cyclase activity. This Homo sapiens (Human) protein is Metabotropic glutamate receptor 3 (GRM3).